A 128-amino-acid polypeptide reads, in one-letter code: Large ribosomal subunit protein bL17 (128 aa).

Belongs to the bacterial ribosomal protein bL17 family. As to quaternary structure, part of the 50S ribosomal subunit. Contacts protein L32.

The chain is Large ribosomal subunit protein bL17 from Streptococcus agalactiae serotype Ia (strain ATCC 27591 / A909 / CDC SS700).